We begin with the raw amino-acid sequence, 443 residues long: MLPAECSRRLVAELRDALDSCAERQRQLEQSLRVSRRLLRVWEPAETPAPEPTPGSEINKEAPSSACPPSPQDLKELELLTQALEKAVRVRKGLSKAGEGVKARSLKSGSASTATKASAPPSTSRCTGSRAPETKPPRGVHHPWVPAKDLPGHRLLLVGDGAHMGQGAGANKPEAGLRDQQIVPQAASQVPEAFTLKDKGALLRLPEAFRKAASRNARLPMCASSLWAQLSSMQTRDSVDAAAATAKTQFLQKMQTAAGLPSSMLSAAEVGRLQKACSMLRLRMREELTADPKDWTQEYRSLLTLEGLQALAGQCLHRLQELQELRSAVVEQPQGPWPEGPPRAALPCGGGADPVWSPQLLLYSSTQELQTLAALRLRVAMLDQQVHLEKVLMAELLPLLSEQEPLGRPWLALCRAAHCLLCEGGQRFLTVLQDEPADRLSPP.

A coiled-coil region spans residues 8 to 33 (RRLVAELRDALDSCAERQRQLEQSLR). 2 disordered regions span residues 45 to 72 (AETP…PSPQ) and 93 to 146 (GLSK…PWVP). Residues 106–124 (LKSGSASTATKASAPPSTS) show a composition bias toward low complexity.

Interacts with TEDC1. Found in a complex with TEDC1, TEDC2, TUBE1 and TUBD1.

It is found in the cell projection. Its subcellular location is the cilium. The protein localises to the cytoplasm. It localises to the cytoskeleton. The protein resides in the microtubule organizing center. It is found in the centrosome. Its subcellular location is the centriole. Functionally, acts as a positive regulator of ciliary hedgehog signaling. Required for centriole stability. This Bos taurus (Bovine) protein is Tubulin epsilon and delta complex protein 2.